The sequence spans 277 residues: tRNA uridine(34) hydroxylase (277 aa).

Residues 126-221 (SSPDVHVIDT…YLETVRGDDS (96 aa)) enclose the Rhodanese domain. Cys181 functions as the Cysteine persulfide intermediate in the catalytic mechanism.

The protein belongs to the TrhO family.

It carries out the reaction uridine(34) in tRNA + AH2 + O2 = 5-hydroxyuridine(34) in tRNA + A + H2O. Functionally, catalyzes oxygen-dependent 5-hydroxyuridine (ho5U) modification at position 34 in tRNAs. This chain is tRNA uridine(34) hydroxylase, found in Anaplasma marginale (strain Florida).